Reading from the N-terminus, the 160-residue chain is Bcl-2-like gene 16 protein (160 aa).

Residues 64–84 carry the BH1 motif; it reads LLTTEHTTNWGKVVAMLSFSA.

The protein belongs to the Bcl-2 family.

The sequence is that of Bcl-2-like gene 16 protein (16) from Saimiri sciureus (Common squirrel monkey).